The following is a 225-amino-acid chain: GrpE protein homolog 2, mitochondrial (225 aa).

The N-terminal 32 residues, 1–32 (MAVRSLWAGRLRVQRLLAWSAAWESKGWPLPF), are a transit peptide targeting the mitochondrion. Lys-142 bears the N6-acetyllysine mark.

The protein belongs to the GrpE family. As to quaternary structure, probable component of the PAM complex at least composed of a mitochondrial HSP70 protein, GRPEL1 or GRPEL2, TIMM44, TIMM16/PAM16 and TIMM14/DNAJC19.

The protein localises to the mitochondrion matrix. In terms of biological role, essential component of the PAM complex, a complex required for the translocation of transit peptide-containing proteins from the inner membrane into the mitochondrial matrix in an ATP-dependent manner. Seems to control the nucleotide-dependent binding of mitochondrial HSP70 to substrate proteins. Stimulates ATPase activity of mt-HSP70. May also serve to modulate the interconversion of oligomeric (inactive) and monomeric (active) forms of mt-HSP70. The sequence is that of GrpE protein homolog 2, mitochondrial (GRPEL2) from Homo sapiens (Human).